The chain runs to 618 residues: Medium-chain acyl-CoA ligase ACSF2, mitochondrial (618 aa).

The transit peptide at 1-44 directs the protein to the mitochondrion; that stretch reads MRATAAYVGMLRLGRMCAGSPGVLGARAALSRSWQEARLQAVRF. Residue Lys-182 is modified to N6-acetyllysine. Lys-185 is modified (N6-acetyllysine; alternate). Lys-185 carries the N6-succinyllysine; alternate modification. 266–274 provides a ligand contact to ATP; that stretch reads TSGTTGSPK. N6-acetyllysine occurs at positions 343 and 401. Lys-481 carries the N6-succinyllysine modification. 2 residues coordinate ATP: Asp-496 and Arg-511. Lys-513 carries the post-translational modification N6-acetyllysine. 2 positions are modified to N6-acetyllysine; alternate: Lys-547 and Lys-573. N6-succinyllysine; alternate is present on residues Lys-547 and Lys-573. Lys-602 is an ATP binding site. Lys-602 carries the post-translational modification N6-succinyllysine.

The protein belongs to the ATP-dependent AMP-binding enzyme family.

The protein resides in the mitochondrion. The enzyme catalyses a medium-chain fatty acid + ATP + CoA = a medium-chain fatty acyl-CoA + AMP + diphosphate. It catalyses the reaction octanoate + ATP + CoA = octanoyl-CoA + AMP + diphosphate. Its function is as follows. Acyl-CoA synthases catalyze the initial reaction in fatty acid metabolism, by forming a thioester with CoA. Has some preference toward medium-chain substrates. Plays a role in adipocyte differentiation. The polypeptide is Medium-chain acyl-CoA ligase ACSF2, mitochondrial (Macaca fascicularis (Crab-eating macaque)).